Reading from the N-terminus, the 236-residue chain is Protein INCA1 (236 aa).

At Ser23 the chain carries Phosphoserine. The tract at residues 75–99 (GLYPPEQLPPPEMLWRRKKRRPCLE) is interaction with CCNA1 and CCNA1/CDK2 complex; essential for CDK2 inhibitory activity. A Nuclear localization signal motif is present at residues 90-95 (RRKKRR). A Phosphothreonine modification is found at Thr182. A phosphoserine mark is found at Ser191 and Ser194.

Belongs to the INCA family. As to quaternary structure, interacts with CCNA1. Interacts with CCNA2, CCNB1 and CCNE1. Found in a complex with CCNA1 and CDK2. Interacts with ZNF16; the interaction inhibits INCA1 activity and induces the cell cycle process. Interacts with SPACA9. Interacts with the CCNA1/CDK2 complex. Interacts with ING5, DAZAP2, RNF26, USP15, SPOUT1, DPH7, TRIM26 and RAB5C. In terms of processing, phosphorylated when part of a complex with CCNA1 and CDK2. Strongly phosphorylated by CDK2 on its C-terminal region spanning amino acid 149-221. Less intensively phosphorylated by CDK2 on its first 75 amino acid residues. Detected in testis, and at lower levels in ovary. Detected at very low levels in testis tumors. Down-regulated in bone marrow cells in acute myeloid and lymphoid leukemia patients as compared with normal bone marrow cells.

The protein resides in the nucleus. It is found in the cytoplasm. Its function is as follows. Binds to CDK2-bound cyclins and inhibits the kinase activity of CDK2; binding to cyclins is critical for its function as CDK inhibitor. Inhibits cell growth and cell proliferation and may play a role in cell cycle control. Required for ING5-mediated regulation of S-phase progression, enhancement of Fas-induced apoptosis and inhibition of cell growth. The polypeptide is Protein INCA1 (INCA1) (Homo sapiens (Human)).